We begin with the raw amino-acid sequence, 306 residues long: Erythromycin 3''-O-methyltransferase (306 aa).

Residues Leu-157 and His-162 each coordinate S-adenosyl-L-methionine.

Belongs to the methyltransferase superfamily.

It carries out the reaction erythromycin C + S-adenosyl-L-methionine = erythromycin A + S-adenosyl-L-homocysteine + H(+). It catalyses the reaction erythromycin D + S-adenosyl-L-methionine = erythromycin B + S-adenosyl-L-homocysteine + H(+). Its pathway is antibiotic biosynthesis; erythromycin biosynthesis. Functionally, S-adenosyl-L-methionine-dependent O-methyltransferase that catalyzes the last step in the erythromycin biosynthesis pathway. Methylates the position 3 of the mycarosyl moiety of erythromycin C, forming the most active form of the antibiotic, erythromycin A. Can also methylate the precursor erythromycin D, forming erythromycin B. In Saccharopolyspora erythraea (strain ATCC 11635 / DSM 40517 / JCM 4748 / NBRC 13426 / NCIMB 8594 / NRRL 2338), this protein is Erythromycin 3''-O-methyltransferase (eryG).